The following is a 424-amino-acid chain: Enolase (424 aa).

Gln162 is a binding site for (2R)-2-phosphoglycerate. Glu204 serves as the catalytic Proton donor. Residues Asp241, Glu284, and Asp311 each coordinate Mg(2+). 4 residues coordinate (2R)-2-phosphoglycerate: Lys336, Arg365, Ser366, and Lys387. Residue Lys336 is the Proton acceptor of the active site.

Belongs to the enolase family. Mg(2+) serves as cofactor.

The protein resides in the cytoplasm. It localises to the secreted. The protein localises to the cell surface. It carries out the reaction (2R)-2-phosphoglycerate = phosphoenolpyruvate + H2O. The protein operates within carbohydrate degradation; glycolysis; pyruvate from D-glyceraldehyde 3-phosphate: step 4/5. Functionally, catalyzes the reversible conversion of 2-phosphoglycerate (2-PG) into phosphoenolpyruvate (PEP). It is essential for the degradation of carbohydrates via glycolysis. This chain is Enolase, found in Agrobacterium fabrum (strain C58 / ATCC 33970) (Agrobacterium tumefaciens (strain C58)).